A 454-amino-acid polypeptide reads, in one-letter code: L-serine dehydratase TdcG (454 aa).

It belongs to the iron-sulfur dependent L-serine dehydratase family. Requires [4Fe-4S] cluster as cofactor.

It catalyses the reaction L-serine = pyruvate + NH4(+). It functions in the pathway amino-acid degradation; L-threonine degradation via propanoate pathway. This chain is L-serine dehydratase TdcG (tdcG), found in Escherichia coli (strain K12).